A 230-amino-acid chain; its full sequence is MSSSGVITQLVTDALSMNAAQDWEDVSLFTPYLNDQALMYDFADCLAVQTFLRMTSLPFNVRQRPNVDFISPDGVVPLLKINKTLITGFNAIVDFVHKKGVTLTSHLSETQVADMRANISMIEHLLTTVEKFVLWNHDETYDKVTKLRYGSVYHWPLSSVLPFVKRRKILEELSDKDWDTKTMDEVGEQADKVFRALSAQLGSQKYLTGDLPTEADALLFGHMYTLITVR.

Belongs to the metaxin family. As to quaternary structure, associates with the mitochondrial contact site and cristae organizing system (MICOS) complex (also known as MINOS or MitOS complex).

Its subcellular location is the mitochondrion outer membrane. In terms of biological role, involved in transport of proteins into the mitochondrion. The chain is Metaxin-2 homolog (mtx-2) from Caenorhabditis elegans.